The following is a 362-amino-acid chain: Dual-specificity RNA methyltransferase RlmN (362 aa).

Glutamate 100 acts as the Proton acceptor in catalysis. The region spanning 106-345 (EPDRNTLCIS…VFIRNSRGED (240 aa)) is the Radical SAM core domain. Cysteines 113 and 350 form a disulfide. [4Fe-4S] cluster-binding residues include cysteine 120, cysteine 124, and cysteine 127. S-adenosyl-L-methionine-binding positions include 177–178 (GE), serine 209, 231–233 (SLH), and asparagine 307. Cysteine 350 (S-methylcysteine intermediate) is an active-site residue.

This sequence belongs to the radical SAM superfamily. RlmN family. It depends on [4Fe-4S] cluster as a cofactor.

It localises to the cytoplasm. It catalyses the reaction adenosine(2503) in 23S rRNA + 2 reduced [2Fe-2S]-[ferredoxin] + 2 S-adenosyl-L-methionine = 2-methyladenosine(2503) in 23S rRNA + 5'-deoxyadenosine + L-methionine + 2 oxidized [2Fe-2S]-[ferredoxin] + S-adenosyl-L-homocysteine. The catalysed reaction is adenosine(37) in tRNA + 2 reduced [2Fe-2S]-[ferredoxin] + 2 S-adenosyl-L-methionine = 2-methyladenosine(37) in tRNA + 5'-deoxyadenosine + L-methionine + 2 oxidized [2Fe-2S]-[ferredoxin] + S-adenosyl-L-homocysteine. Its function is as follows. Specifically methylates position 2 of adenine 2503 in 23S rRNA and position 2 of adenine 37 in tRNAs. m2A2503 modification seems to play a crucial role in the proofreading step occurring at the peptidyl transferase center and thus would serve to optimize ribosomal fidelity. This chain is Dual-specificity RNA methyltransferase RlmN, found in Desulfotalea psychrophila (strain LSv54 / DSM 12343).